The following is a 1019-amino-acid chain: UPF0182 protein Krad_1193 (1019 aa).

The next 7 membrane-spanning stretches (helical) occupy residues Gly19–Ala39, Leu61–Val81, Arg115–Ser135, Trp169–Leu189, Val213–Asp233, Ala264–Thr284, and Ile291–Val311. Disordered regions lie at residues Gly897–Asp934 and Asp977–Pro1019. The span at Asp977–Ala1005 shows a compositional bias: low complexity. Residues Pro1006–Pro1019 are compositionally biased toward pro residues.

This sequence belongs to the UPF0182 family.

It localises to the cell membrane. The protein is UPF0182 protein Krad_1193 of Kineococcus radiotolerans (strain ATCC BAA-149 / DSM 14245 / SRS30216).